The chain runs to 208 residues: Probable nicotinate-nucleotide adenylyltransferase (208 aa).

The protein belongs to the NadD family.

It carries out the reaction nicotinate beta-D-ribonucleotide + ATP + H(+) = deamido-NAD(+) + diphosphate. Its pathway is cofactor biosynthesis; NAD(+) biosynthesis; deamido-NAD(+) from nicotinate D-ribonucleotide: step 1/1. Its function is as follows. Catalyzes the reversible adenylation of nicotinate mononucleotide (NaMN) to nicotinic acid adenine dinucleotide (NaAD). The polypeptide is Probable nicotinate-nucleotide adenylyltransferase (Kineococcus radiotolerans (strain ATCC BAA-149 / DSM 14245 / SRS30216)).